A 377-amino-acid polypeptide reads, in one-letter code: Nitric oxide reductase FlRd-NAD(+) reductase (377 aa).

The protein belongs to the FAD-dependent oxidoreductase family. The cofactor is FAD.

The protein localises to the cytoplasm. It catalyses the reaction 2 reduced [nitric oxide reductase rubredoxin domain] + NAD(+) + H(+) = 2 oxidized [nitric oxide reductase rubredoxin domain] + NADH. The protein operates within nitrogen metabolism; nitric oxide reduction. Its function is as follows. One of at least two accessory proteins for anaerobic nitric oxide (NO) reductase. Reduces the rubredoxin moiety of NO reductase. This Salmonella heidelberg (strain SL476) protein is Nitric oxide reductase FlRd-NAD(+) reductase.